The following is a 184-amino-acid chain: ATP synthase subunit b, chloroplastic (184 aa).

The chain crosses the membrane as a helical span at residues 27-49 (LATNLINLSVVLGVLVFFGKGVL).

Belongs to the ATPase B chain family. In terms of assembly, F-type ATPases have 2 components, F(1) - the catalytic core - and F(0) - the membrane proton channel. F(1) has five subunits: alpha(3), beta(3), gamma(1), delta(1), epsilon(1). F(0) has four main subunits: a(1), b(1), b'(1) and c(10-14). The alpha and beta chains form an alternating ring which encloses part of the gamma chain. F(1) is attached to F(0) by a central stalk formed by the gamma and epsilon chains, while a peripheral stalk is formed by the delta, b and b' chains.

It localises to the plastid. Its subcellular location is the chloroplast thylakoid membrane. Its function is as follows. F(1)F(0) ATP synthase produces ATP from ADP in the presence of a proton or sodium gradient. F-type ATPases consist of two structural domains, F(1) containing the extramembraneous catalytic core and F(0) containing the membrane proton channel, linked together by a central stalk and a peripheral stalk. During catalysis, ATP synthesis in the catalytic domain of F(1) is coupled via a rotary mechanism of the central stalk subunits to proton translocation. Functionally, component of the F(0) channel, it forms part of the peripheral stalk, linking F(1) to F(0). The chain is ATP synthase subunit b, chloroplastic from Cicer arietinum (Chickpea).